The sequence spans 446 residues: D(1A) dopamine receptor (446 aa).

The Extracellular segment spans residues 1-23 (MRTLNTSAMDGTGLVVERDFSVR). Residue N5 is glycosylated (N-linked (GlcNAc...) asparagine). Residues 24–49 (ILTACFLSLLILSTLLGNTLVCAAVI) form a helical membrane-spanning segment. Over 50 to 60 (RFRHLRSKVTN) the chain is Cytoplasmic. Residues 61 to 87 (FFVISLAVSDLLVAVLVMPWKAVAEIA) traverse the membrane as a helical segment. Over 88–96 (GFWPFGSFC) the chain is Extracellular. The cysteines at positions 96 and 186 are disulfide-linked. A helical membrane pass occupies residues 97–119 (NIWVAFDIMCSTASILNLCVISV). The Cytoplasmic portion of the chain corresponds to 120 to 138 (DRYWAISSPFRYERKMTPK). The helical transmembrane segment at 139-163 (AAFILISVAWTLSVLISFIPVQLSW) threads the bilayer. Over 164–192 (HKAKPTSPSDGNATSLAETIDNCDSSLSR) the chain is Extracellular. N-linked (GlcNAc...) asparagine glycosylation occurs at N175. Residues 193–218 (TYAISSSVISFYIPVAIMIVTYTRIY) form a helical membrane-spanning segment. Topologically, residues 219-272 (RIAQKQIRRIAALERAAVHAKNCQTTTGNGKPVECSQPESSFKMSFKRETKVLK) are cytoplasmic. The helical transmembrane segment at 273–299 (TLSVIMGVFVCCWLPFFILNCILPFCG) threads the bilayer. Residues 300 to 312 (SGETQPFCIDSIT) lie on the Extracellular side of the membrane. Residues 313 to 337 (FDVFVWFGWANSSLNPIIYAFNADF) traverse the membrane as a helical segment. The Cytoplasmic portion of the chain corresponds to 338–446 (RKAFSTLLGC…PITQNGQHPT (109 aa)). 2 S-palmitoyl cysteine lipidation sites follow: C347 and C351.

The protein belongs to the G-protein coupled receptor 1 family. Interacts with DNAJC14 via its C-terminus. Interacts with DRD2. Interacts with DORIP1.

The protein resides in the cell membrane. The protein localises to the endoplasmic reticulum membrane. Its subcellular location is the cell projection. It is found in the cilium membrane. It localises to the dendrite. The protein resides in the dendritic spine. Its function is as follows. Dopamine receptor whose activity is mediated by G proteins which activate adenylyl cyclase. In Macaca mulatta (Rhesus macaque), this protein is D(1A) dopamine receptor (DRD1).